Reading from the N-terminus, the 382-residue chain is Lipid-A-disaccharide synthase (382 aa).

Belongs to the LpxB family.

It carries out the reaction 2-N,3-O-bis[(3R)-3-hydroxytetradecanoyl]-alpha-D-glucosaminyl 1-phosphate + UDP-2-N,3-O-bis[(3R)-3-hydroxytetradecanoyl]-alpha-D-glucosamine = lipid A disaccharide (E. coli) + UDP + H(+). It catalyses the reaction a lipid X + a UDP-2-N,3-O-bis[(3R)-3-hydroxyacyl]-alpha-D-glucosamine = a lipid A disaccharide + UDP + H(+). The protein operates within glycolipid biosynthesis; lipid IV(A) biosynthesis; lipid IV(A) from (3R)-3-hydroxytetradecanoyl-[acyl-carrier-protein] and UDP-N-acetyl-alpha-D-glucosamine: step 5/6. In terms of biological role, condensation of UDP-2,3-diacylglucosamine and 2,3-diacylglucosamine-1-phosphate to form lipid A disaccharide, a precursor of lipid A, a phosphorylated glycolipid that anchors the lipopolysaccharide to the outer membrane of the cell. The chain is Lipid-A-disaccharide synthase from Enterobacter sp. (strain 638).